Here is a 505-residue protein sequence, read N- to C-terminus: Neuronal acetylcholine receptor subunit alpha-3 (505 aa).

Positions Met-1–Ala-31 are cleaved as a signal peptide. Over Ser-32–Ile-250 the chain is Extracellular. N-linked (GlcNAc...) asparagine glycosylation is found at Asn-55 and Asn-172. 2 disulfide bridges follow: Cys-159/Cys-173 and Cys-223/Cys-224. A helical membrane pass occupies residues Pro-251–Pro-266. At Ser-267–Asp-268 the chain is on the cytoplasmic side. A helical membrane pass occupies residues Cys-269 to Val-285. Residues Phe-286–Tyr-307 are Extracellular-facing. The chain crosses the membrane as a helical span at residues Leu-308–Leu-326. At Asn-327–Val-474 the chain is on the cytoplasmic side. Phosphoserine is present on residues Ser-413 and Ser-416. The helical transmembrane segment at Ile-475 to Gly-493 threads the bilayer. Residues Leu-494–Ala-505 are Extracellular-facing.

The protein belongs to the ligand-gated ion channel (TC 1.A.9) family. Acetylcholine receptor (TC 1.A.9.1) subfamily. Alpha-3/CHRNA3 sub-subfamily. As to quaternary structure, neuronal AChR is composed of two different types of subunits: alpha and beta. CHRNA3/Alpha-3 subunit can be combined to CHRNA5/alpha-5, CHRNB2/beta-2 CHRNB3/beta-3 or CHRNB4/beta-4 to give rise to functional receptors. Forms stoichiometries such as (CHRNA3)2:(CHRNB4)3 or (CHRNA3:CHRNB4)2:CHRNB3. Part of a complex composed of STUB1/CHIP, VCP/p97, CHRNA3, and UBXN2A that modulates the ubiquitination and endoplasmic reticulum-associated degradation (ERAD) of CHRNA3. Within the complex UBXN2A acts as a scaffold protein required for the interaction of CHRNA3 with VCP/p97, this interaction also inhibits CHRNA3 ubiquitination by STUB1/CHIP and subsequently ERAD. Interacts with UBXN2A (via SEP domain), the interaction is required for the interaction of CHRNA3 in the STUB1:VCP:UBXN2A complex. Interacts with RIC3; which is required for proper folding and assembly. Interacts with LYPD6. Post-translationally, ubiquitinated; by STUB1/CHIP and thereafter degraded by the 26S proteosome complex.

The protein localises to the synaptic cell membrane. It is found in the cell membrane. The protein resides in the endoplasmic reticulum. Its subcellular location is the golgi apparatus. The catalysed reaction is Ca(2+)(in) = Ca(2+)(out). The enzyme catalyses K(+)(in) = K(+)(out). It carries out the reaction Na(+)(in) = Na(+)(out). Its activity is regulated as follows. Activated by a myriad of ligands such as acetylcholine, cytisine, nicotine, choline and epibatidine. The heteropentamer CHRNA3:CHRNB2 activity is blocked by alpha-conotoxins ImI, ImII, PnIA, GID and MII. The heteropentamer CHRNA3:CHRNB4 activity is blocked by the alpha-conotoxin ImI and AuIB. In terms of biological role, component of neuronal acetylcholine receptors (nAChRs) that function as pentameric, ligand-gated cation channels with high calcium permeability among other activities. nAChRs are excitatory neurotrasnmitter receptors formed by a collection of nAChR subunits known to mediate synaptic transmission in the nervous system and the neuromuscular junction. Each nAchR subunit confers differential attributes to channel properties, including activation, deactivation and desensitization kinetics, pH sensitivity, cation permeability, and binding to allosteric modulators. CHRNA3 forms heteropentameric neuronal acetylcholine receptors with CHRNB2 and CHRNB4, with CHRNA5, and CHRNB3 as accesory subunits. CHRNA3:CHRNB4 being predominant in neurons of the autonomic ganglia, it is known as ganglionic nicotinic receptor. CHRNA3:CHRNB4 or CHRNA3:CHRNA5:CHRNB4 play also an important role in the habenulo-interpeduncular tract, modulating the mesolimbic dopamine system and affecting reward circuits and addiction. Hypothalamic CHRNA3:CHRNB4 nAChR activation by nicotine leads to activation of POMC neurons and a decrease in food intake. Also expressed in the urothelium where it modulates reflex bladder activity by increasing intracellular calcium through extracellular influx and basal ATP release. In Homo sapiens (Human), this protein is Neuronal acetylcholine receptor subunit alpha-3.